A 100-amino-acid polypeptide reads, in one-letter code: Small ribosomal subunit protein uS14c (100 aa).

It belongs to the universal ribosomal protein uS14 family. As to quaternary structure, part of the 30S ribosomal subunit.

It is found in the plastid. The protein resides in the chloroplast. In terms of biological role, binds 16S rRNA, required for the assembly of 30S particles. The sequence is that of Small ribosomal subunit protein uS14c from Aethionema cordifolium (Lebanon stonecress).